Here is a 201-residue protein sequence, read N- to C-terminus: Small ribosomal subunit protein uS4 (201 aa).

The segment at 26 to 46 (LARRAYAPGDHGRDRRGKLSE) is disordered. Positions 35–44 (DHGRDRRGKL) are enriched in basic and acidic residues. The region spanning 93-156 (RRLDNMVYRL…KNLDIIKNAV (64 aa)) is the S4 RNA-binding domain.

It belongs to the universal ribosomal protein uS4 family. As to quaternary structure, part of the 30S ribosomal subunit. Contacts protein S5. The interaction surface between S4 and S5 is involved in control of translational fidelity.

One of the primary rRNA binding proteins, it binds directly to 16S rRNA where it nucleates assembly of the body of the 30S subunit. In terms of biological role, with S5 and S12 plays an important role in translational accuracy. This chain is Small ribosomal subunit protein uS4, found in Limosilactobacillus reuteri (strain DSM 20016) (Lactobacillus reuteri).